Here is a 427-residue protein sequence, read N- to C-terminus: Kallistatin (427 aa).

The N-terminal stretch at 1–20 is a signal peptide; that stretch reads MHLIDYLLLLLVGLLALSHG. N-linked (GlcNAc...) asparagine glycans are attached at residues asparagine 33, asparagine 108, asparagine 157, and asparagine 238.

The protein belongs to the serpin family. Monomer and some homodimers.

The protein resides in the secreted. Functionally, inhibits human amidolytic and kininogenase activities of tissue kallikrein. This chain is Kallistatin (SERPINA4), found in Pongo abelii (Sumatran orangutan).